The primary structure comprises 813 residues: G-type lectin S-receptor-like serine/threonine-protein kinase LECRK1 (813 aa).

The signal sequence occupies residues 1–19 (MVALLLFPMLLQLLSPTCA). The Extracellular segment spans residues 20–466 (QTQKNITLGS…NRKHWVLGSS (447 aa)). The Bulb-type lectin domain maps to 22–149 (QKNITLGSTL…DGTTKWQTFD (128 aa)). N-linked (GlcNAc...) asparagine glycosylation is found at Asn24, Asn57, Asn164, Asn168, Asn219, and Asn242. The EGF-like; atypical domain occupies 293-346 (PQNICHAIVSDVGSGVCGFNSYCTFDGTRNQIASCQCPPWYKFFDEQKKYKGCK). Cystine bridges form between Cys297–Cys315, Cys309–Cys327, Cys329–Cys345, Cys391–Cys413, and Cys395–Cys401. Positions 354–433 (CDLDEATALA…NMADYVQRTV (80 aa)) constitute a PAN domain. N-linked (GlcNAc...) asparagine glycans are attached at residues Asn407 and Asn441. A helical transmembrane segment spans residues 467-487 (LILGTSILVNFALISIFLFGT). Residues 488-813 (YCRIATKKNI…DPCSFISSLP (326 aa)) lie on the Cytoplasmic side of the membrane. One can recognise a Protein kinase domain in the interval 523-797 (AGFHEILGAG…KVTQMLDGAV (275 aa)). Residues 529 to 537 (LGAGASGVV) and Lys553 contribute to the ATP site. Residue Asp647 is the Proton acceptor of the active site.

It belongs to the protein kinase superfamily. Ser/Thr protein kinase family.

It is found in the membrane. It carries out the reaction L-seryl-[protein] + ATP = O-phospho-L-seryl-[protein] + ADP + H(+). It catalyses the reaction L-threonyl-[protein] + ATP = O-phospho-L-threonyl-[protein] + ADP + H(+). Functionally, involved in innate immunity. Required for the expression of defense-related genes PR1A, LOX2 and CHS1 upon biotic stresses. Required for basal resistance to the fungal blast (M.grisea), bacterial blight (X.oryzae pv. oryzae, Xoo) and the herbivorous insect brown planthopper (N.lugens, BPH). May be involved in several defense signaling pathways. Involved in the promotion of seed germination. Required for the expression of alpha-amylase genes during seed germination. Involved in resistance against the herbivorous insect brown planthopper (N.lugens, BPH). Member of the BPH3 (BPH resistance locus 3) cluster which contains LECRK1, LECRK2 and LECRK3. The polypeptide is G-type lectin S-receptor-like serine/threonine-protein kinase LECRK1 (Oryza sativa subsp. japonica (Rice)).